We begin with the raw amino-acid sequence, 129 residues long: Small ribosomal subunit protein eS6 (129 aa).

The interval 106–129 is disordered; sequence QINASIVSRGEQSIDDLLGGEDDE.

This sequence belongs to the eukaryotic ribosomal protein eS6 family.

This Natronomonas pharaonis (strain ATCC 35678 / DSM 2160 / CIP 103997 / JCM 8858 / NBRC 14720 / NCIMB 2260 / Gabara) (Halobacterium pharaonis) protein is Small ribosomal subunit protein eS6.